The following is a 536-amino-acid chain: Membrane protein insertase YidC (536 aa).

The helical transmembrane segment at 7-27 threads the bilayer; that stretch reads IIAVVLSLFVLIGWSYLSEFM. Positions 43 to 70 are disordered; it reads VQQKASEPVAQPVQTASAPAASSFAPTE. The span at 58 to 68 shows a compositional bias: low complexity; the sequence is ASAPAASSFAP. A run of 3 helical transmembrane segments spans residues 346–366, 415–435, and 495–515; these read GNYGVAIIILTILVKLLFWPL, GGCLPMLLQIPVFLGLYQGLL, and IMMFMPVVFTFMFLNFPAGLV.

Belongs to the OXA1/ALB3/YidC family. Type 1 subfamily. As to quaternary structure, interacts with the Sec translocase complex via SecD. Specifically interacts with transmembrane segments of nascent integral membrane proteins during membrane integration.

Its subcellular location is the cell inner membrane. In terms of biological role, required for the insertion and/or proper folding and/or complex formation of integral membrane proteins into the membrane. Involved in integration of membrane proteins that insert both dependently and independently of the Sec translocase complex, as well as at least some lipoproteins. Aids folding of multispanning membrane proteins. The sequence is that of Membrane protein insertase YidC from Oleidesulfovibrio alaskensis (strain ATCC BAA-1058 / DSM 17464 / G20) (Desulfovibrio alaskensis).